Here is a 278-residue protein sequence, read N- to C-terminus: Troponin T, slow skeletal muscle (278 aa).

Positions methionine 1–glutamate 37 are enriched in acidic residues. Disordered stretches follow at residues methionine 1–phenylalanine 63 and arginine 105–valine 153. Serine 2 carries the phosphoserine; by CK2 modification. Over residues serine 43–isoleucine 55 the composition is skewed to pro residues. Residues arginine 105 to lysine 149 show a composition bias toward basic and acidic residues.

It belongs to the troponin T family. As to quaternary structure, interacts with TPM3.

Functionally, troponin T is the tropomyosin-binding subunit of troponin, the thin filament regulatory complex which confers calcium-sensitivity to striated muscle actomyosin ATPase activity. This Homo sapiens (Human) protein is Troponin T, slow skeletal muscle (TNNT1).